Reading from the N-terminus, the 280-residue chain is NAD kinase (280 aa).

The active-site Proton acceptor is the aspartate 67. NAD(+) contacts are provided by residues 67-68, arginine 72, 138-139, aspartate 167, alanine 175, 178-183, and glutamine 237; these read DG, ND, and TAYSLS.

It belongs to the NAD kinase family. A divalent metal cation serves as cofactor.

It is found in the cytoplasm. It catalyses the reaction NAD(+) + ATP = ADP + NADP(+) + H(+). In terms of biological role, involved in the regulation of the intracellular balance of NAD and NADP, and is a key enzyme in the biosynthesis of NADP. Catalyzes specifically the phosphorylation on 2'-hydroxyl of the adenosine moiety of NAD to yield NADP. The sequence is that of NAD kinase from Aeropyrum pernix (strain ATCC 700893 / DSM 11879 / JCM 9820 / NBRC 100138 / K1).